Reading from the N-terminus, the 291-residue chain is uncharacterized protein (291 aa).

It to E.cuniculi ECU03_0120.

This is an uncharacterized protein from Encephalitozoon cuniculi (strain GB-M1) (Microsporidian parasite).